Consider the following 93-residue polypeptide: UPF0298 protein GWCH70_0997 (93 aa).

It belongs to the UPF0298 family.

It localises to the cytoplasm. This Geobacillus sp. (strain WCH70) protein is UPF0298 protein GWCH70_0997.